Here is an 871-residue protein sequence, read N- to C-terminus: Tegument protein UL47 homolog (871 aa).

A disordered region spans residues 1-212; sequence MDQHHGARGG…DEDDMEVIRD (212 aa). The Nuclear localization signal signature appears at 13 to 33; sequence IRRPRRSIESRSHPFRATGNT. Composition is skewed to polar residues over residues 30–41 and 59–81; these read TGNTQRTYSTPR and EQASNQDESSNPSTSNAQQSTSF. 3 stretches are compositionally biased toward acidic residues: residues 114–134, 146–155, and 185–207; these read SSSEEEEEEGPAQAPLDEEDQ, SSDENDEEED, and SESETDIDAEEEEEDDEDDEDDM.

Belongs to the alphaherpesvirinae HHV-1 UL47 family. As to quaternary structure, interacts with US3 kinase. Interacts with UL31 and UL34; these interactions seem important for efficient virion nuclear egress. Interacts with UL41/VHS. Post-translationally, phosphorylated by US3. This phosphorylation is required for proper nuclear localization.

The protein resides in the virion tegument. It localises to the host nucleus. The protein localises to the host cytoplasm. Its function is as follows. Tegument protein that can bind to various RNA transcripts. Plays a role in the attenuation of selective viral and cellular mRNA degradation by modulating the activity of host shutoff RNase UL41/VHS. Also plays a role in the primary envelopment of virions in the perinuclear space, probably by interacting with two nuclear egress proteins UL31 and UL34. This is Tegument protein UL47 homolog from Equine herpesvirus 1 (strain V592) (EHV-1).